A 90-amino-acid chain; its full sequence is MVKNLFISVISQEETKENRGSVEFQIFNFTNKIQRLTSHLKLHKKDYLSQKGLRKILGKRQRLLAYLSKKNKVRYKELIEKLDIRETKTH.

The protein belongs to the universal ribosomal protein uS15 family. Part of the 30S ribosomal subunit.

It localises to the plastid. It is found in the chloroplast. The protein is Small ribosomal subunit protein uS15c (rps15-A) of Ipomoea purpurea (Common morning glory).